The following is a 321-amino-acid chain: Lipoyl synthase (321 aa).

C68, C73, C79, C94, C98, C101, and S308 together coordinate [4Fe-4S] cluster. The Radical SAM core domain occupies F80–T297.

The protein belongs to the radical SAM superfamily. Lipoyl synthase family. Requires [4Fe-4S] cluster as cofactor.

It is found in the cytoplasm. It catalyses the reaction [[Fe-S] cluster scaffold protein carrying a second [4Fe-4S](2+) cluster] + N(6)-octanoyl-L-lysyl-[protein] + 2 oxidized [2Fe-2S]-[ferredoxin] + 2 S-adenosyl-L-methionine + 4 H(+) = [[Fe-S] cluster scaffold protein] + N(6)-[(R)-dihydrolipoyl]-L-lysyl-[protein] + 4 Fe(3+) + 2 hydrogen sulfide + 2 5'-deoxyadenosine + 2 L-methionine + 2 reduced [2Fe-2S]-[ferredoxin]. It functions in the pathway protein modification; protein lipoylation via endogenous pathway; protein N(6)-(lipoyl)lysine from octanoyl-[acyl-carrier-protein]: step 2/2. Catalyzes the radical-mediated insertion of two sulfur atoms into the C-6 and C-8 positions of the octanoyl moiety bound to the lipoyl domains of lipoate-dependent enzymes, thereby converting the octanoylated domains into lipoylated derivatives. This is Lipoyl synthase from Erwinia tasmaniensis (strain DSM 17950 / CFBP 7177 / CIP 109463 / NCPPB 4357 / Et1/99).